Reading from the N-terminus, the 331-residue chain is MDPSTLMILAIVAVAIIVLAVFFTFVPVMLWISALAAGVKISIFTLVGMRLRRVIPNRVVNPLIKAHKAGLNVGTNQLESHYLAGGNVDRVVNALIAAQRANIELTFERCAAIDLAGRDVLEAVQMSVNPKVIETPFIAGVAMDGIEVKAKARITVRANIERLVGGAGEETIVARVGEGIVSTIGSSDNHKKVLENPDMISQTVLGKGLDSGTAFEILSIDIADVDIGKNIGAILQTDQAEADKNIAQAKAEERRAMAVAQEQEMRARVEEMRAKVVEAEAEVPLAMAEALREGNIGVMDYMNIKNIDADTEMRDSFGKLTKDPSDEDRKS.

The next 2 membrane-spanning stretches (helical) occupy residues 6–26 (LMIL…FTFV) and 28–48 (VMLW…TLVG). The required for correct localization stretch occupies residues 236 to 331 (QTDQAEADKN…KDPSDEDRKS (96 aa)). 4 consecutive short sequence motifs (EA repeat) follow at residues 240-242 (AEA), 251-253 (AEE), 278-282 (EAEAE), and 288-290 (AEA). A disordered region spans residues 312 to 331 (EMRDSFGKLTKDPSDEDRKS).

Belongs to the flotillin-like FloA family. In terms of assembly, homooligomerizes. Interacts with FloT. Interacts with FtsH midcell. Interacts with PhoR, colocalizes with PhoR in FloA-only membrane rafts.

Its subcellular location is the cell membrane. The protein localises to the membrane raft. Its function is as follows. Found in functional membrane microdomains (FMM) that may be equivalent to eukaryotic membrane rafts. FMMs are highly dynamic and increase in number as cells age. FloA and FloT function is partially redundant; double deletions have marked synthetic phenotypes. Flotillins are thought to be important factors in membrane fluidity, especially during periods of rapid growth in rich media. Whether specific proteins are associated with FMMs is controversial; in one study FloT rafts have been shown to include proteins involved in adaptation to stationary phase, while FloA-FloT rafts include proteins involved in differentiation including sporulation, biofilm formation and DNA uptake competence. Another (more finely resolved) study only showed association of NfeD2 with FloT rafts of all the proteins examined. Involved in spatial organization of membranes, perhaps recruiting proteins to specific membrane regions. Simultaneous overexpression of both FloA and FloT leads to defects in cell division and differentiation, in part caused by stabilization of FtsH and its subsequent increased ability to degrade proteins. Cells make more biofilm, are about half as long, have less EzrA and more frequent Z-rings. The polypeptide is Flotillin-like protein FloA (Bacillus subtilis (strain 168)).